The sequence spans 126 residues: Ribosome-binding factor A (126 aa).

It belongs to the RbfA family. Monomer. Binds 30S ribosomal subunits, but not 50S ribosomal subunits or 70S ribosomes.

Its subcellular location is the cytoplasm. Functionally, one of several proteins that assist in the late maturation steps of the functional core of the 30S ribosomal subunit. Associates with free 30S ribosomal subunits (but not with 30S subunits that are part of 70S ribosomes or polysomes). Required for efficient processing of 16S rRNA. May interact with the 5'-terminal helix region of 16S rRNA. The polypeptide is Ribosome-binding factor A (Thermosipho africanus (strain TCF52B)).